The chain runs to 95 residues: Large ribosomal subunit protein uL23 (95 aa).

Belongs to the universal ribosomal protein uL23 family. Part of the 50S ribosomal subunit. Contacts protein L29, and trigger factor when it is bound to the ribosome.

One of the early assembly proteins it binds 23S rRNA. One of the proteins that surrounds the polypeptide exit tunnel on the outside of the ribosome. Forms the main docking site for trigger factor binding to the ribosome. In Solibacter usitatus (strain Ellin6076), this protein is Large ribosomal subunit protein uL23.